Consider the following 765-residue polypeptide: Membrane metallo-endopeptidase-like 1 (765 aa).

Residues 1-19 (MVERAGWCRKKSPGFVEYG) lie on the Cytoplasmic side of the membrane. The chain crosses the membrane as a helical; Signal-anchor for type II membrane protein span at residues 20–40 (LMVLLLLLLGAIVTLGVFYSI). Over 41–765 (GKQLPLLTSL…MHPMKRCRIW (725 aa)) the chain is Lumenal. The Peptidase M13 domain maps to 74-765 (ICTTPSCVIA…MHPMKRCRIW (692 aa)). 5 disulfides stabilise this stretch: C75/C80, C98/C750, C106/C710, C161/C425, and C636/C762. Residue R121 participates in a peptide binding. N163, N279, N303, and N336 each carry an N-linked (GlcNAc...) asparagine glycan. Residues 523–549 (FENGLQNLKNNAQRSLKKLREKVDQNL) are a coiled coil. A Zn(2+)-binding site is contributed by H599. Residue E600 is part of the active site. Residues H603 and E662 each contribute to the Zn(2+) site. The active-site Proton donor is the D666. N-linked (GlcNAc...) asparagine glycosylation occurs at N694.

Belongs to the peptidase M13 family. Zn(2+) is required as a cofactor. N-glycosylated. In terms of tissue distribution, highly expressed in testis. Also expressed in ovary. Weakly or not expressed in brain, lung, heart, liver, kidney, adrenal gland and intestine.

The protein resides in the membrane. The protein localises to the secreted. The enzyme catalyses Preferential cleavage of polypeptides between hydrophobic residues, particularly with Phe or Tyr at P1'.. Its activity is regulated as follows. Inhibited by thiorphan and phosphoramidon. Functionally, metalloprotease involved in sperm function, possibly by modulating the processes of fertilization and early embryonic development. Degrades a broad variety of small peptides with a preference for peptides shorter than 3 kDa containing neutral bulky aliphatic or aromatic amino acid residues. Shares the same substrate specificity with MME and cleaves peptides at the same amide bond. The sequence is that of Membrane metallo-endopeptidase-like 1 (Mmel1) from Mus musculus (Mouse).